We begin with the raw amino-acid sequence, 299 residues long: Farnesyl diphosphate synthase (299 aa).

3 residues coordinate isopentenyl diphosphate: lysine 45, arginine 48, and histidine 77. 2 residues coordinate Mg(2+): aspartate 84 and aspartate 90. Residue arginine 95 participates in (2E)-geranyl diphosphate binding. Isopentenyl diphosphate is bound at residue arginine 96. (2E)-geranyl diphosphate contacts are provided by lysine 181, threonine 182, glutamine 220, and lysine 237.

This sequence belongs to the FPP/GGPP synthase family. Mg(2+) is required as a cofactor.

Its subcellular location is the cytoplasm. It catalyses the reaction isopentenyl diphosphate + (2E)-geranyl diphosphate = (2E,6E)-farnesyl diphosphate + diphosphate. The protein is Farnesyl diphosphate synthase (ispA) of Escherichia coli (strain K12).